The primary structure comprises 623 residues: Adenine deaminase 2 (623 aa).

Belongs to the metallo-dependent hydrolases superfamily. Adenine deaminase family. Mn(2+) is required as a cofactor.

It carries out the reaction adenine + H2O + H(+) = hypoxanthine + NH4(+). This is Adenine deaminase 2 from Jannaschia sp. (strain CCS1).